The chain runs to 184 residues: Holliday junction branch migration complex subunit RuvA (184 aa).

Residues 1-61 are domain I; sequence MIAALRGNIF…ENEYTLYGFA (61 aa). The domain II stretch occupies residues 62–135; that stretch reads DKNEKKLFDS…GEFEVVFEEQ (74 aa). Position 135 (Gln135) is a region of interest, flexible linker. The interval 135–184 is domain III; sequence QNPVFNQALSALESLGFNKNDIVKALNGIKSDNLEETIKLALKKLSKDIK.

Belongs to the RuvA family. Homotetramer. Forms an RuvA(8)-RuvB(12)-Holliday junction (HJ) complex. HJ DNA is sandwiched between 2 RuvA tetramers; dsDNA enters through RuvA and exits via RuvB. An RuvB hexamer assembles on each DNA strand where it exits the tetramer. Each RuvB hexamer is contacted by two RuvA subunits (via domain III) on 2 adjacent RuvB subunits; this complex drives branch migration. In the full resolvosome a probable DNA-RuvA(4)-RuvB(12)-RuvC(2) complex forms which resolves the HJ.

It localises to the cytoplasm. Its function is as follows. The RuvA-RuvB-RuvC complex processes Holliday junction (HJ) DNA during genetic recombination and DNA repair, while the RuvA-RuvB complex plays an important role in the rescue of blocked DNA replication forks via replication fork reversal (RFR). RuvA specifically binds to HJ cruciform DNA, conferring on it an open structure. The RuvB hexamer acts as an ATP-dependent pump, pulling dsDNA into and through the RuvAB complex. HJ branch migration allows RuvC to scan DNA until it finds its consensus sequence, where it cleaves and resolves the cruciform DNA. The chain is Holliday junction branch migration complex subunit RuvA from Nautilia profundicola (strain ATCC BAA-1463 / DSM 18972 / AmH).